A 673-amino-acid chain; its full sequence is Ribonucleoprotein PTB-binding 2 (673 aa).

The segment covering 1–17 (MAARGGGAGGAGSGSGP) has biased composition (gly residues). The segment at 1–34 (MAARGGGAGGAGSGSGPSAGTAGEAAEPALRPGE) is disordered. The span at 18–29 (SAGTAGEAAEPA) shows a compositional bias: low complexity. 3 RRM domains span residues 58-129 (RKIL…LQPT), 131-209 (ALLC…WMDV), and 220-298 (KCLC…FCAP). The tract at residues 481-549 (QLPAGQAGPG…KGTEVASKNQ (69 aa)) is disordered. Positions 499-512 (SASVSISEASFSGS) are enriched in low complexity. A compositionally biased stretch (polar residues) spans 529–549 (TGNQKTPQSQPKGTEVASKNQ).

In terms of assembly, interacts with PTBP1 and RAVER1. Expressed throughout embryogenesis. Detected at low levels in adult lung, brain and kidney, but not in the other tissues tested.

The protein resides in the nucleus. It is found in the cytoplasm. Its function is as follows. May bind single-stranded nucleic acids. The sequence is that of Ribonucleoprotein PTB-binding 2 (Raver2) from Mus musculus (Mouse).